Here is a 286-residue protein sequence, read N- to C-terminus: Putative short-chain type dehydrogenase/reductase Rv0148 (286 aa).

NAD(+) is bound at residue 11 to 35 (VTGAGGGLGREYALTLAGEGASVVV). S151 contributes to the substrate binding site. Y164 acts as the Proton acceptor in catalysis. K280 is covalently cross-linked (Isoglutamyl lysine isopeptide (Lys-Gln) (interchain with Q-Cter in protein Pup)).

This sequence belongs to the short-chain dehydrogenases/reductases (SDR) family. Pupylated at Lys-280 by the prokaryotic ubiquitin-like protein Pup, which probably leads to its degradation by the proteasome.

The protein is Putative short-chain type dehydrogenase/reductase Rv0148 of Mycobacterium tuberculosis (strain ATCC 25618 / H37Rv).